The following is a 272-amino-acid chain: Formamidopyrimidine-DNA glycosylase (272 aa).

The active-site Schiff-base intermediate with DNA is the P2. E3 functions as the Proton donor in the catalytic mechanism. Residue K58 is the Proton donor; for beta-elimination activity of the active site. The DNA site is built by H93, R112, and R153. An FPG-type zinc finger spans residues 238–272 (HVYGKSGQHCPKCGNILEDLKISNRGTVYCPHCQR). R262 functions as the Proton donor; for delta-elimination activity in the catalytic mechanism.

The protein belongs to the FPG family. Monomer. Zn(2+) is required as a cofactor.

It catalyses the reaction Hydrolysis of DNA containing ring-opened 7-methylguanine residues, releasing 2,6-diamino-4-hydroxy-5-(N-methyl)formamidopyrimidine.. The catalysed reaction is 2'-deoxyribonucleotide-(2'-deoxyribose 5'-phosphate)-2'-deoxyribonucleotide-DNA = a 3'-end 2'-deoxyribonucleotide-(2,3-dehydro-2,3-deoxyribose 5'-phosphate)-DNA + a 5'-end 5'-phospho-2'-deoxyribonucleoside-DNA + H(+). In terms of biological role, involved in base excision repair of DNA damaged by oxidation or by mutagenic agents. Acts as a DNA glycosylase that recognizes and removes damaged bases. Has a preference for oxidized purines, such as 7,8-dihydro-8-oxoguanine (8-oxoG). Has AP (apurinic/apyrimidinic) lyase activity and introduces nicks in the DNA strand. Cleaves the DNA backbone by beta-delta elimination to generate a single-strand break at the site of the removed base with both 3'- and 5'-phosphates. This chain is Formamidopyrimidine-DNA glycosylase, found in Dichelobacter nodosus (strain VCS1703A).